The chain runs to 400 residues: Enoyl-[acyl-carrier-protein] reductase [NADH] (400 aa).

NAD(+) is bound by residues 48-53 (GSSSGY), 74-75 (FE), 111-112 (DA), and 139-140 (LA). Y225 lines the substrate pocket. Y235 (proton donor) is an active-site residue. NAD(+) contacts are provided by residues K244 and 273 to 275 (VVT).

It belongs to the TER reductase family. In terms of assembly, monomer.

The enzyme catalyses a 2,3-saturated acyl-[ACP] + NAD(+) = a (2E)-enoyl-[ACP] + NADH + H(+). Its pathway is lipid metabolism; fatty acid biosynthesis. In terms of biological role, involved in the final reduction of the elongation cycle of fatty acid synthesis (FAS II). Catalyzes the reduction of a carbon-carbon double bond in an enoyl moiety that is covalently linked to an acyl carrier protein (ACP). This chain is Enoyl-[acyl-carrier-protein] reductase [NADH], found in Shewanella frigidimarina (strain NCIMB 400).